Consider the following 136-residue polypeptide: MSARGKARSRALEVLFEAEQRSVSAFDAMTARREKTDLVINPYTVEIVEGVVSMQATIDEFLQTYAQGWTLERMPSVDRIILRIGAWELLYNDEVPDGVAVSEAVALAKTMSTDESPAFINGLLGRLQKLKPSLLA.

This sequence belongs to the NusB family.

Involved in transcription antitermination. Required for transcription of ribosomal RNA (rRNA) genes. Binds specifically to the boxA antiterminator sequence of the ribosomal RNA (rrn) operons. This Paenarthrobacter aurescens (strain TC1) protein is Transcription antitermination protein NusB.